Consider the following 364-residue polypeptide: UDP-N-acetylglucosamine--N-acetylmuramyl-(pentapeptide) pyrophosphoryl-undecaprenol N-acetylglucosamine transferase (364 aa).

Residues 15 to 17, Asn123, Arg164, Ser191, and Gln286 contribute to the UDP-N-acetyl-alpha-D-glucosamine site; that span reads TGG.

It belongs to the glycosyltransferase 28 family. MurG subfamily.

Its subcellular location is the cell inner membrane. The enzyme catalyses di-trans,octa-cis-undecaprenyl diphospho-N-acetyl-alpha-D-muramoyl-L-alanyl-D-glutamyl-meso-2,6-diaminopimeloyl-D-alanyl-D-alanine + UDP-N-acetyl-alpha-D-glucosamine = di-trans,octa-cis-undecaprenyl diphospho-[N-acetyl-alpha-D-glucosaminyl-(1-&gt;4)]-N-acetyl-alpha-D-muramoyl-L-alanyl-D-glutamyl-meso-2,6-diaminopimeloyl-D-alanyl-D-alanine + UDP + H(+). Its pathway is cell wall biogenesis; peptidoglycan biosynthesis. Cell wall formation. Catalyzes the transfer of a GlcNAc subunit on undecaprenyl-pyrophosphoryl-MurNAc-pentapeptide (lipid intermediate I) to form undecaprenyl-pyrophosphoryl-MurNAc-(pentapeptide)GlcNAc (lipid intermediate II). In Prochlorococcus marinus (strain MIT 9515), this protein is UDP-N-acetylglucosamine--N-acetylmuramyl-(pentapeptide) pyrophosphoryl-undecaprenol N-acetylglucosamine transferase.